The following is a 93-amino-acid chain: Putative transmembrane protein ORF25 (93 aa).

The next 3 membrane-spanning stretches (helical) occupy residues 1–21 (MAGI…NVNA), 22–42 (FLVL…YASI), and 60–80 (LWIF…VMSL).

It is found in the host membrane. The sequence is that of Putative transmembrane protein ORF25 from His1 virus (isolate Australia/Victoria) (His1V).